Here is a 178-residue protein sequence, read N- to C-terminus: Bifunctional protein PyrR (178 aa).

A PRPP-binding motif is present at residues 99–111 (VVLVDDVIFKGRT).

Belongs to the purine/pyrimidine phosphoribosyltransferase family. PyrR subfamily.

The enzyme catalyses UMP + diphosphate = 5-phospho-alpha-D-ribose 1-diphosphate + uracil. Its function is as follows. Regulates the transcription of the pyrimidine nucleotide (pyr) operon in response to exogenous pyrimidines. Functionally, also displays a weak uracil phosphoribosyltransferase activity which is not physiologically significant. In Nostoc punctiforme (strain ATCC 29133 / PCC 73102), this protein is Bifunctional protein PyrR.